Consider the following 97-residue polypeptide: DNA-directed RNA polymerase subunit omega (97 aa).

This sequence belongs to the RNA polymerase subunit omega family. As to quaternary structure, the RNAP catalytic core consists of 2 alpha, 1 beta, 1 beta' and 1 omega subunit. When a sigma factor is associated with the core the holoenzyme is formed, which can initiate transcription.

The enzyme catalyses RNA(n) + a ribonucleoside 5'-triphosphate = RNA(n+1) + diphosphate. In terms of biological role, promotes RNA polymerase assembly. Latches the N- and C-terminal regions of the beta' subunit thereby facilitating its interaction with the beta and alpha subunits. The polypeptide is DNA-directed RNA polymerase subunit omega (Corynebacterium glutamicum (strain ATCC 13032 / DSM 20300 / JCM 1318 / BCRC 11384 / CCUG 27702 / LMG 3730 / NBRC 12168 / NCIMB 10025 / NRRL B-2784 / 534)).